The following is a 66-amino-acid chain: Cysteine proteinase inhibitor (66 aa).

The Secondary area of contact motif lies at 18–22; the sequence is QVVAG.

The protein belongs to the cystatin family. Phytocystatin subfamily. In tubers of untreated plants. After ABA treatment or mechanical wounding is mostly accumulated in leaves, to a lesser extent in stems, but not in roots.

This is Cysteine proteinase inhibitor (CYS-PIN) from Solanum tuberosum (Potato).